The sequence spans 779 residues: Probable ATP-dependent RNA helicase DHX40 (779 aa).

Residues 1–28 (MSRFPAVAGRAPRRQEEGERSRDLQEER) form a disordered region. The segment covering 13–28 (RRQEEGERSRDLQEER) has biased composition (basic and acidic residues). A Helicase ATP-binding domain is found at 63–231 (IQAVRDNSFL…FGNCPIFDIP (169 aa)). ATP is bound at residue 76–83 (GNTGSGKT). The short motif at 173–176 (DEAH) is the DEAH box element. Residues 263–442 (TMDIHLNEMA…SVVLTLKCLA (180 aa)) form the Helicase C-terminal domain. The interval 737-779 (SKDVLKKMQRRNDDKSISDARARFLERKQQRTQDHSDTRKETG) is disordered.

It belongs to the DEAD box helicase family. DEAH subfamily. As to expression, ubiquitously expressed.

It catalyses the reaction ATP + H2O = ADP + phosphate + H(+). Functionally, probable ATP-dependent RNA helicase. The polypeptide is Probable ATP-dependent RNA helicase DHX40 (DHX40) (Homo sapiens (Human)).